We begin with the raw amino-acid sequence, 73 residues long: Large ribosomal subunit protein bL31 (73 aa).

The protein belongs to the bacterial ribosomal protein bL31 family. Type A subfamily. As to quaternary structure, part of the 50S ribosomal subunit.

Functionally, binds the 23S rRNA. This is Large ribosomal subunit protein bL31 (rpmE) from Roseobacter denitrificans (strain ATCC 33942 / OCh 114) (Erythrobacter sp. (strain OCh 114)).